A 226-amino-acid polypeptide reads, in one-letter code: Putative ankyrin repeat protein RF_0939 (226 aa).

ANK repeat units lie at residues 56–86 (VSTTELFLASSNNALKVAEWLVETKKANVNM), 91–120 (FKDTPLNSAARHGSYKVAEYLIAKGAAVNG), 125–154 (LLGPPLYEAVSGKYLNVAKLLLEKGAAVDQ), and 157–194 (SGETPLHAVAKNVRYTSKDIKDDEIYKLLVSYGADTNA).

The chain is Putative ankyrin repeat protein RF_0939 from Rickettsia felis (strain ATCC VR-1525 / URRWXCal2) (Rickettsia azadi).